A 149-amino-acid polypeptide reads, in one-letter code: 5-hydroxytryptamine receptor 1E (149 aa).

Topologically, residues 1–6 (HQPANY) are extracellular. Residues 7–31 (LICSLAVTDLLVAVLVMPLSIMYIV) traverse the membrane as a helical segment. Over 32 to 39 (MDSWRLGY) the chain is Cytoplasmic. Residues 40 to 65 (FICEVWLSVDMTCCTCSILHLCVIAL) traverse the membrane as a helical segment. A disulfide bridge links C42 with C120. D49 and C53 together coordinate serotonin. The DRY motif; important for ligand-induced conformation changes motif lies at 66–68 (DRY). The Extracellular segment spans residues 66 to 85 (DRYWAITNAIEYARKRTAKR). A helical membrane pass occupies residues 86–104 (AGLMILTVWTISIFISMPP). At 105 to 149 (LFWRSHRQLSPPPSQCAIQHDHVIYTIYSTLGAFYIPLTLILILY) the chain is on the cytoplasmic side.

Belongs to the G-protein coupled receptor 1 family.

The protein resides in the cell membrane. Its function is as follows. G-protein coupled receptor for 5-hydroxytryptamine (serotonin). Also functions as a receptor for various alkaloids and psychoactive substances. Ligand binding causes a conformation change that triggers signaling via guanine nucleotide-binding proteins (G proteins) and modulates the activity of downstream effectors, such as adenylate cyclase. HTR1E is coupled to G(i)/G(o) G alpha proteins and mediates inhibitory neurotransmission by inhibiting adenylate cyclase activity. This Sus scrofa (Pig) protein is 5-hydroxytryptamine receptor 1E (HTR1E).